The chain runs to 120 residues: UPF0344 protein BCAH187_A1308 (120 aa).

4 consecutive transmembrane segments (helical) span residues Ile6 to Gly26, Val32 to Leu52, Trp64 to Val84, and Ala91 to Leu111.

Belongs to the UPF0344 family.

The protein localises to the cell membrane. The polypeptide is UPF0344 protein BCAH187_A1308 (Bacillus cereus (strain AH187)).